Here is a 70-residue protein sequence, read N- to C-terminus: DNA-directed RNA polymerase subunit omega (70 aa).

It belongs to the RNA polymerase subunit omega family. In terms of assembly, the RNAP catalytic core consists of 2 alpha, 1 beta, 1 beta' and 1 omega subunit. When a sigma factor is associated with the core the holoenzyme is formed, which can initiate transcription.

It carries out the reaction RNA(n) + a ribonucleoside 5'-triphosphate = RNA(n+1) + diphosphate. Its function is as follows. Promotes RNA polymerase assembly. Latches the N- and C-terminal regions of the beta' subunit thereby facilitating its interaction with the beta and alpha subunits. In Staphylococcus epidermidis (strain ATCC 35984 / DSM 28319 / BCRC 17069 / CCUG 31568 / BM 3577 / RP62A), this protein is DNA-directed RNA polymerase subunit omega.